The primary structure comprises 158 residues: Transcription elongation factor GreB (158 aa).

Belongs to the GreA/GreB family. GreB subfamily.

Necessary for efficient RNA polymerase transcription elongation past template-encoded arresting sites. The arresting sites in DNA have the property of trapping a certain fraction of elongating RNA polymerases that pass through, resulting in locked ternary complexes. Cleavage of the nascent transcript by cleavage factors such as GreA or GreB allows the resumption of elongation from the new 3'terminus. GreB releases sequences of up to 9 nucleotides in length. The chain is Transcription elongation factor GreB from Escherichia coli (strain K12).